A 300-amino-acid chain; its full sequence is Tyrosine recombinase XerC (300 aa).

A Core-binding (CB) domain is found at 4–90; sequence VALSLDVSRF…ALRSFFDWLV (87 aa). The 180-residue stretch at 111–290 folds into the Tyr recombinase domain; it reads HLPKNIDVDD…DFQHLASVYD (180 aa). Residues arginine 150, lysine 174, histidine 242, arginine 245, and histidine 268 contribute to the active site. The active-site O-(3'-phospho-DNA)-tyrosine intermediate is tyrosine 277.

Belongs to the 'phage' integrase family. XerC subfamily. As to quaternary structure, forms a cyclic heterotetrameric complex composed of two molecules of XerC and two molecules of XerD, in which XerC interacts with XerD via its C-terminal region, XerD interacts with XerC via its C-terminal region and so on.

The protein resides in the cytoplasm. With respect to regulation, ftsK may regulate the catalytic switch between XerC and XerD in the heterotetrameric complex during the two steps of the recombination process. Functionally, site-specific tyrosine recombinase, which acts by catalyzing the cutting and rejoining of the recombining DNA molecules. Binds cooperatively to specific DNA consensus sequences that are separated from XerD binding sites by a short central region, forming the heterotetrameric XerC-XerD complex that recombines DNA substrates. The complex is essential to convert dimers of the bacterial chromosome into monomers to permit their segregation at cell division. It also contributes to the segregational stability of plasmids. In the complex XerC specifically exchanges the top DNA strands. The protein is Tyrosine recombinase XerC of Salmonella typhi.